The chain runs to 231 residues: MAKLSKRVKAFKAKVDRTKAYPFDNAVALIKECASAKFDESIDISVQLGVDAKKSDQVVRGSVVLPAGTGKSVRVAVFATGEKAGQAKAAGADIVGMDDLAEQIKAGNMPFDIVIASPDTMRIVGTLGQILGPRGMMPNPKVGTVTPDVATAVKNAKAGQVQYRTDKAGIIHATIGRKSFSDEALKSNLLALIDALNKAKPATSKGVYLRKVSLSSTMGAGVRVDQSTLAA.

This sequence belongs to the universal ribosomal protein uL1 family. In terms of assembly, part of the 50S ribosomal subunit.

In terms of biological role, binds directly to 23S rRNA. The L1 stalk is quite mobile in the ribosome, and is involved in E site tRNA release. Protein L1 is also a translational repressor protein, it controls the translation of the L11 operon by binding to its mRNA. This Janthinobacterium sp. (strain Marseille) (Minibacterium massiliensis) protein is Large ribosomal subunit protein uL1.